We begin with the raw amino-acid sequence, 559 residues long: MRLALLVLATIGYAVADLFTSIADMQNLLETERNIPKILDKYIHDEEERLVQLKKLSEEYSKKNEISIENGLKDITNPINAFLLIKRKIFDWKEIESKMNANKAGNVVSSITDDSYGVRYPTADDLSGAAIGLLRLQDTYRLDTKDLADGKIYADQGNYTFSAKDCFEIARAAYNEHDFYHTVMWMEEAQRRLGDEVEPTVEVEDILEYLAFALYKQNNLKHALKLTEELYKMNPTHPRAKGNVKWYEDLLEQEGVRRSDMRKNLPPIQNRRPDSVLGNTERTMYEALCRNEVPVSQKDISRLYCYYKRDRPFLVYAPIKVEIKRFNPLAVLFKDVISDDEVAAIQELAKPKLARATVHDSVTGKLVTATYRISKSAWLKEWEGDVVETVNKRIGYMTNLEMETAEELQIANYGIGGHYDPHFDHAKKEESKSFESLGTGNRIATVLFYMSQPSHGGGTVFTEAKSTILPTKNDALFWYNLYKQGDGNPDTRHAACPVLVGIKWVSNKWIHEKGNEFRRPCGLKSSDYERFVGDLGYGPEPRNAPNVSPNLAKDVWETL.

Residues 1 to 16 (MRLALLVLATIGYAVA) form the signal peptide. N158 is a glycosylation site (N-linked (GlcNAc...) asparagine). The Fe2OG dioxygenase domain occupies 404-512 (TAEELQIANY…KWVSNKWIHE (109 aa)). Positions 422, 424, and 493 each coordinate Fe cation. K503 is a binding site for 2-oxoglutarate.

The protein belongs to the P4HA family. Heterotetramer of two alpha chains and two beta chains. Exists either as a phy-1(2)/pdi-2(2) tetramer or as a phy-1/phy-2/pdi-2(2) tetramer. Fe(2+) serves as cofactor. It depends on L-ascorbate as a cofactor.

It is found in the endoplasmic reticulum lumen. The catalysed reaction is L-prolyl-[collagen] + 2-oxoglutarate + O2 = trans-4-hydroxy-L-prolyl-[collagen] + succinate + CO2. Functionally, catalyzes the post-translational formation of 4-hydroxyproline in -Xaa-Pro-Gly- sequences in collagens and other proteins. The polypeptide is Prolyl 4-hydroxylase subunit alpha-1 (dpy-18) (Caenorhabditis elegans).